A 504-amino-acid chain; its full sequence is Fumitremorgin C monooxygenase (504 aa).

Residues 12–32 traverse the membrane as a helical segment; that stretch reads LGVVGASLIVILGIILLFPLG. Cys442 contacts heme.

Belongs to the cytochrome P450 family. It depends on heme as a cofactor.

It localises to the membrane. It carries out the reaction fumitremorgin C + 2 reduced [NADPH--hemoprotein reductase] + 2 O2 = 12alpha,13alpha-dihydroxyfumitremorgin C + 2 oxidized [NADPH--hemoprotein reductase] + 2 H2O + 2 H(+). It participates in mycotoxin biosynthesis. Functionally, cytochrome P450 monooxygenase; part of the gene cluster that mediates the biosynthesis of fumitremorgins, indole alkaloids that carry not only intriguing chemical structures, but also interesting biological and pharmacological activities. The biosynthesis of fumitremorgin-type alkaloids begins by condensation of the two amino acids L-tryptophan and L-proline to brevianamide F, catalyzed by the non-ribosomal peptide synthetase ftmA. Brevianamide F is then prenylated by the prenyltransferase ftmPT1/ftmB in the presence of dimethylallyl diphosphate, resulting in the formation of tryprostatin B. The three cytochrome P450 monooxygenases, ftmP450-1/ftmC, ftmP450-2/ftmE and ftmP450-3/FtmG, are responsible for the conversion of tryprostatin B to 6-hydroxytryprostatin B, tryprostatin A to fumitremorgin C and fumitremorgin C to 12,13-dihydroxyfumitremorgin C, respectively. The putative methyltransferase ftmMT/ftmD is expected for the conversion of 6-hydroxytryprostatin B to tryprostatin A. FtmPT2/FtmH catalyzes the prenylation of 12,13-dihydroxyfumitre-morgin C in the presence of dimethylallyl diphosphate, resulting in the formation of fumitremorgin B. Fumitremorgin B is further converted to verruculogen by ftmOx1/ftmF via the insertion of an endoperoxide bond between the two prenyl moieties. In some fungal species, verruculogen is further converted to fumitremorgin A, but the enzymes involved in this step have not been identified yet. The polypeptide is Fumitremorgin C monooxygenase (Aspergillus fumigatus (Neosartorya fumigata)).